Consider the following 355-residue polypeptide: uncharacterized protein (355 aa).

A chloroplast-targeting transit peptide spans 1–49 (MPMTVVSGRFSTALLPTCFSLSRLHSVKYAAQRRVVFVSRSAHASSASV).

The protein belongs to the methyltransferase superfamily.

It localises to the plastid. It is found in the chloroplast. The protein resides in the plastoglobule. This is an uncharacterized protein from Arabidopsis thaliana (Mouse-ear cress).